The sequence spans 148 residues: MKRTLMAFLLLGGLALAQADGAKIYAQCAGCHQQNGQGIPGAFPPLAGHVAEILAKEGGREYLILVLLYGLQGQIEVKGMKYNGVMSSFAQLKDEEIAAVLNHIATAWGDAKKVKGFKPFTAEEVKKLRAKKLTPQQVLAERKKLGLK.

Residues M1–A17 form the signal peptide. Q18 carries the post-translational modification Pyrrolidone carboxylic acid. Positions 28, 31, 32, and 86 each coordinate heme c.

Post-translationally, binds 1 heme c group covalently per subunit.

This monoheme basic protein appears to function as an electron donor to cytochrome oxidase in T.thermophilus. The polypeptide is Cytochrome c-552 (cycA) (Thermus thermophilus (strain ATCC 27634 / DSM 579 / HB8)).